We begin with the raw amino-acid sequence, 321 residues long: Methionine import ATP-binding protein MetN (321 aa).

The ABC transporter domain maps to 2 to 237 (ISIKNVNKYY…NTKGLRKLIG (236 aa)). 34-41 (GHSGAGKS) contributes to the ATP binding site.

This sequence belongs to the ABC transporter superfamily. Methionine importer (TC 3.A.1.24) family. In terms of assembly, the complex is composed of two ATP-binding proteins (MetN), two transmembrane proteins (MetI) and a solute-binding protein (MetQ).

It localises to the cell membrane. It carries out the reaction L-methionine(out) + ATP + H2O = L-methionine(in) + ADP + phosphate + H(+). It catalyses the reaction D-methionine(out) + ATP + H2O = D-methionine(in) + ADP + phosphate + H(+). In terms of biological role, part of the ABC transporter complex MetNIQ involved in methionine import. Responsible for energy coupling to the transport system. The protein is Methionine import ATP-binding protein MetN of Clostridioides difficile (strain 630) (Peptoclostridium difficile).